Reading from the N-terminus, the 408-residue chain is Succinylornithine transaminase (408 aa).

Residue lysine 252 is modified to N6-(pyridoxal phosphate)lysine.

This sequence belongs to the class-III pyridoxal-phosphate-dependent aminotransferase family. AstC subfamily. Pyridoxal 5'-phosphate is required as a cofactor.

It catalyses the reaction N(2)-succinyl-L-ornithine + 2-oxoglutarate = N-succinyl-L-glutamate 5-semialdehyde + L-glutamate. It functions in the pathway amino-acid degradation; L-arginine degradation via AST pathway; L-glutamate and succinate from L-arginine: step 3/5. In terms of biological role, catalyzes the transamination of N(2)-succinylornithine and alpha-ketoglutarate into N(2)-succinylglutamate semialdehyde and glutamate. Can also act as an acetylornithine aminotransferase. This chain is Succinylornithine transaminase, found in Salmonella dublin (strain CT_02021853).